Consider the following 277-residue polypeptide: Large ribosomal subunit protein uL2 (277 aa).

Disordered regions lie at residues 37-60 (KNST…GHKH) and 223-264 (VVMN…NKRT). Residues 39–49 (STAGRNNNGHI) are compositionally biased toward polar residues. Positions 50–60 (TTRHKGGGHKH) are enriched in basic residues. Residues 229 to 244 (DHPHGGGEGRTGEARE) show a composition bias toward basic and acidic residues.

Belongs to the universal ribosomal protein uL2 family. Part of the 50S ribosomal subunit. Forms a bridge to the 30S subunit in the 70S ribosome.

One of the primary rRNA binding proteins. Required for association of the 30S and 50S subunits to form the 70S ribosome, for tRNA binding and peptide bond formation. It has been suggested to have peptidyltransferase activity; this is somewhat controversial. Makes several contacts with the 16S rRNA in the 70S ribosome. The sequence is that of Large ribosomal subunit protein uL2 from Neisseria meningitidis serogroup B (strain ATCC BAA-335 / MC58).